A 283-amino-acid chain; its full sequence is MAGLREFFKETVEEKLLQQMPDDVLQQTTPATQLLEKRRELEQVERALATQKEDFHVRMATLDQRKAELERKEYQLQESLLKFDRFLKENDARRERAEQKAASENEVAQAREEQVQNLRAELRSLQERKTRNRDILQRYSIFEAFMQTVLGEYPEYNEVQDVITRYKTLVATQQDLRSRDRNNQTEIERVRREMARYKEAHRVSMLDCSNKLATLRTAKERAHTETLYWENQLSAVQGAASKRTLLLGQIKMYAYPPAHPGTCPTRTWLALTREPRCCHEPPR.

2 coiled-coil regions span residues 31–139 (ATQL…LQRY) and 174–204 (QDLR…HRVS).

Belongs to the CFAP73 family.

This is Coiled-coil domain-containing protein 42 homolog from Monosiga brevicollis (Choanoflagellate).